Consider the following 294-residue polypeptide: MLPNEELVPVKRITPQSSWSWISIDATGKKTVLDVDKYVIMHRVQIHARDLRILDPNLFYPSAILGRERAIVLNLEHIKAIITAKEVLIQDSSDENLIPTLEEFQTRLSVGNKAHGGQLDGDVVEEDESAFEFRALEVALEAICSFLAARTIELEKSAYPALDELTLKLTSRNLLRVCKLKSSMTRLTAQVQKIKDELEQLLEDDEDMAELYLSRKLAGASSPAIDSGEHINWYPTSPTIGAKISRAKSHLVRSATVRGDDKNDVEEVEMLLEAHFYANRQNFEQINRATRVCG.

Residues 179–216 are a coiled coil; the sequence is KLKSSMTRLTAQVQKIKDELEQLLEDDEDMAELYLSRK.

Belongs to the CorA metal ion transporter (MIT) (TC 1.A.35.5) family.

The protein is Putative inactive magnesium transporter MRS2-8 (MRS2-8) of Arabidopsis thaliana (Mouse-ear cress).